The sequence spans 106 residues: uncharacterized protein (106 aa).

The protein localises to the mitochondrion. This is an uncharacterized protein from Claviceps purpurea (Ergot fungus).